A 401-amino-acid polypeptide reads, in one-letter code: Cysteine desulfurase (401 aa).

Pyridoxal 5'-phosphate contacts are provided by residues 72–73 (AT), Asn151, Gln179, and 199–201 (SAH). Lys202 is modified (N6-(pyridoxal phosphate)lysine). Position 237 (Thr237) interacts with pyridoxal 5'-phosphate. The active-site Cysteine persulfide intermediate is Cys324. Position 324 (Cys324) interacts with [2Fe-2S] cluster.

This sequence belongs to the class-V pyridoxal-phosphate-dependent aminotransferase family. NifS/IscS subfamily. In terms of assembly, homodimer. The cofactor is pyridoxal 5'-phosphate.

It carries out the reaction (sulfur carrier)-H + L-cysteine = (sulfur carrier)-SH + L-alanine. Its function is as follows. Catalyzes the removal of elemental sulfur atoms from cysteine to produce alanine. Seems to participate in the biosynthesis of the nitrogenase metalloclusters by providing the inorganic sulfur required for the Fe-S core formation. The polypeptide is Cysteine desulfurase (Enterobacter agglomerans (Erwinia herbicola)).